A 590-amino-acid polypeptide reads, in one-letter code: Glutamine--fructose-6-phosphate aminotransferase [isomerizing] (590 aa).

Residue cysteine 2 is the Nucleophile; for GATase activity of the active site. Positions 2–219 constitute a Glutamine amidotransferase type-2 domain; the sequence is CGIVACILKD…DGEMVILDGD (218 aa). SIS domains lie at 277-415 and 438-580; these read VVEE…PELM and LAAT…PDKP. The active-site For Fru-6P isomerization activity is the lysine 585.

In terms of assembly, homodimer.

Its subcellular location is the cytoplasm. The catalysed reaction is D-fructose 6-phosphate + L-glutamine = D-glucosamine 6-phosphate + L-glutamate. In terms of biological role, catalyzes the first step in hexosamine metabolism, converting fructose-6P into glucosamine-6P using glutamine as a nitrogen source. This Methanothermobacter thermautotrophicus (strain ATCC 29096 / DSM 1053 / JCM 10044 / NBRC 100330 / Delta H) (Methanobacterium thermoautotrophicum) protein is Glutamine--fructose-6-phosphate aminotransferase [isomerizing].